We begin with the raw amino-acid sequence, 185 residues long: Ribosome-recycling factor (185 aa).

The protein belongs to the RRF family.

It localises to the cytoplasm. Functionally, responsible for the release of ribosomes from messenger RNA at the termination of protein biosynthesis. May increase the efficiency of translation by recycling ribosomes from one round of translation to another. The polypeptide is Ribosome-recycling factor (Salinispora tropica (strain ATCC BAA-916 / DSM 44818 / JCM 13857 / NBRC 105044 / CNB-440)).